We begin with the raw amino-acid sequence, 577 residues long: Arginine--tRNA ligase (577 aa).

The 'HIGH' region motif lies at 122–132 (PNVAKEMHVGH).

It belongs to the class-I aminoacyl-tRNA synthetase family. As to quaternary structure, monomer.

Its subcellular location is the cytoplasm. It carries out the reaction tRNA(Arg) + L-arginine + ATP = L-arginyl-tRNA(Arg) + AMP + diphosphate. The chain is Arginine--tRNA ligase from Escherichia coli O6:K15:H31 (strain 536 / UPEC).